Here is a 252-residue protein sequence, read N- to C-terminus: F-box/SPRY domain-containing protein 1 (252 aa).

The 48-residue stretch at 1 to 48 (MVDPLCNYNVLEAIFSYLELSDLSRCSQVCKSWYHFLNDENSDVWRWH) folds into the F-box domain. Residues 58–250 (IKSDLLASVT…VSMVYLGTPL (193 aa)) form the B30.2/SPRY domain.

Belongs to the FBXO45/Fsn family. As to quaternary structure, component of an E3 ubiquitin ligase complex composed of hiw and Fsn.

The protein localises to the synapse. It participates in protein modification; protein ubiquitination. Its function is as follows. Required in the presynaptic motoneuron to down-regulate the levels of wnd and restrain synaptic terminal growth at the neuromuscular junction (NMJ). The sequence is that of F-box/SPRY domain-containing protein 1 from Drosophila mojavensis (Fruit fly).